The primary structure comprises 84 residues: UPF0473 protein CPF_2030 (84 aa).

The protein belongs to the UPF0473 family.

The chain is UPF0473 protein CPF_2030 from Clostridium perfringens (strain ATCC 13124 / DSM 756 / JCM 1290 / NCIMB 6125 / NCTC 8237 / Type A).